Reading from the N-terminus, the 982-residue chain is MVQSDSPEELAQRAKPAWRLQQMPVQLSNFVSKTPLIGSEWPPTGDWRSANNNSLGDWNKCCVPGSEIPQHLGPFGNSSLTMLTAQQPGEKIHPDGGYVSPKEDGRKSSEHTNSYDVSASQSPSNDGAQSDSTSDEHIDVECMTETEMDTDEKDSTIKPEDQATPKLEEGSDSKPESTSVEGTSSNYQVTSEPVQMPQMPIPVIPSFLKNSLPAPIPITPTQSANVERSNSPSIEEALLLTLSQQQFAEVFAEAAKIRKSSSESIGFQRSGTSAFLNIEPKEMSMSSANNNNEEAPASTVSACSTPTTTTSASFCRPPGLGPVALPPTQNGQTPMLVCPICGFMCPSKFHFNSHMNTHGDHQCSMCDYTSRTEGRLKKHMRESHTVEEQLRAGFESEPAKESASSPKNLSLSKDGSATSPINEIFNLSTTMASILDSTNNAVSSTSTTEQPSALSALTLDMSSTPSLLSTLAHSSFGVSALDQIKAISENPSFMPEGGINLASALGVVSNAIKGDTPSPEKQSNGECRRSSSGKIKIFKCKQCGHQSLSKDDQWAHARTHIPAEKQLNCQHCNFVTEYKHHLEYHYRNHIGSKPFQCKKCAYNCVNKSMLNSHMKSHTNHYQFRCMDCTYATKYCHSLKLHLKKYNHRRVPEGIEMSGGDSSPPFTSDATITFSPLMKQEIKTETVEPVTSIAQPFPFNPMMGNHGLNFANHMLLNKHLDVGLMGLRNSVMSPLKCSACDFVASSADEKMRHSMSHILNSSNVPTSIASLYNSLNLPSFSHVAPDNDNALESMDCDVKIDDDNITESHCYEEMDQGSDSAVSPTGSSQISSGDEETKKCKSLSLEQISARANGNNSPMSNDSAMEKDGESADDAPHSPSDTTSVPSPPLHSSSIVAPIPITPQPNEFLQSILAQASLLGPLLANRPSAFYCDHCKIPFDTQQVLDSHMRFHTPGNPFMCSDCQYQAFNELSFALHMYQARHQ.

The disordered stretch occupies residues 87 to 194 (QPGEKIHPDG…SNYQVTSEPV (108 aa)). Basic and acidic residues predominate over residues 101 to 110 (PKEDGRKSSE). Polar residues predominate over residues 111 to 132 (HTNSYDVSASQSPSNDGAQSDS). Over residues 142–152 (CMTETEMDTDE) the composition is skewed to acidic residues. Positions 153–175 (KDSTIKPEDQATPKLEEGSDSKP) are enriched in basic and acidic residues. The span at 176 to 193 (ESTSVEGTSSNYQVTSEP) shows a compositional bias: polar residues. C2H2-type zinc fingers lie at residues 336-358 (LVCP…MNTH), 361-384 (HQCS…RESH), 538-560 (FKCK…ARTH), 567-589 (LNCQ…YRNH), 595-617 (FQCK…MKSH), 623-647 (FRCM…KYNH), and 734-756 (LKCS…SMSH). A disordered region spans residues 377–415 (KKHMRESHTVEEQLRAGFESEPAKESASSPKNLSLSKDG). A disordered region spans residues 811–896 (EEMDQGSDSA…PPLHSSSIVA (86 aa)). Composition is skewed to polar residues over residues 816-831 (GSDS…QISS) and 843-862 (SLEQ…SNDS). Residues 863-875 (AMEKDGESADDAP) are compositionally biased toward basic and acidic residues. 2 consecutive C2H2-type zinc fingers follow at residues 929–951 (FYCD…MRFH) and 957–981 (FMCS…QARH).

The protein belongs to the hunchback C2H2-type zinc-finger protein family. In terms of tissue distribution, expressed primarily in ectodermal cells during embryonic and larval development.

It localises to the nucleus. In terms of biological role, required for the late stages of development. Plays a role in the developmental timing of postembryonic hypodermal seam cell fusion events and adult alae production. The protein is Hunchback-like protein of Caenorhabditis elegans.